A 108-amino-acid chain; its full sequence is UPF0060 membrane protein sll0793 (108 aa).

A run of 4 helical transmembrane segments spans residues Leu7 to Ile27, Ser32 to Leu52, Tyr64 to Val84, and Arg86 to Asn106.

It belongs to the UPF0060 family.

The protein resides in the cell inner membrane. In Synechocystis sp. (strain ATCC 27184 / PCC 6803 / Kazusa), this protein is UPF0060 membrane protein sll0793.